Consider the following 417-residue polypeptide: NADH-quinone oxidoreductase subunit D (417 aa).

Belongs to the complex I 49 kDa subunit family. As to quaternary structure, NDH-1 is composed of 14 different subunits. Subunits NuoB, C, D, E, F, and G constitute the peripheral sector of the complex.

Its subcellular location is the cell inner membrane. The catalysed reaction is a quinone + NADH + 5 H(+)(in) = a quinol + NAD(+) + 4 H(+)(out). NDH-1 shuttles electrons from NADH, via FMN and iron-sulfur (Fe-S) centers, to quinones in the respiratory chain. The immediate electron acceptor for the enzyme in this species is believed to be ubiquinone. Couples the redox reaction to proton translocation (for every two electrons transferred, four hydrogen ions are translocated across the cytoplasmic membrane), and thus conserves the redox energy in a proton gradient. This is NADH-quinone oxidoreductase subunit D from Paraburkholderia phytofirmans (strain DSM 17436 / LMG 22146 / PsJN) (Burkholderia phytofirmans).